A 220-amino-acid chain; its full sequence is Adenylate kinase (220 aa).

13 to 18 (GAGKGT) contributes to the ATP binding site. Residues 33 to 62 (ATGDMLRSQVARQTELGKEAKKIMDQGGLV) form an NMP region. AMP contacts are provided by residues Thr-34, Arg-39, 60-62 (GLV), 89-92 (GFPR), and Gln-96. The interval 130 to 167 (GRLVHPGSGRSYHLEFNPPKVPMKDDVTGEPLIQRSDD) is LID. ATP is bound by residues Arg-131 and 140 to 141 (SY). Residues Arg-164 and Arg-175 each coordinate AMP. Gln-203 lines the ATP pocket.

It belongs to the adenylate kinase family. AK2 subfamily. In terms of assembly, monomer.

The protein localises to the cytoplasm. Its subcellular location is the cytosol. The protein resides in the mitochondrion intermembrane space. It localises to the nucleus. The catalysed reaction is AMP + ATP = 2 ADP. Functionally, catalyzes the reversible transfer of the terminal phosphate group between ATP and AMP. Plays an important role in cellular energy homeostasis and in adenine nucleotide metabolism. Adenylate kinase activity is critical for regulation of the phosphate utilization and the AMP de novo biosynthesis pathways. This is Adenylate kinase (adk1) from Schizosaccharomyces pombe (strain 972 / ATCC 24843) (Fission yeast).